The chain runs to 387 residues: Cysteine desulfurase IscS (387 aa).

Residues 73 to 74 (AT), asparagine 155, glutamine 183, and 203 to 205 (SAH) contribute to the pyridoxal 5'-phosphate site. An N6-(pyridoxal phosphate)lysine modification is found at lysine 206. Threonine 241 is a binding site for pyridoxal 5'-phosphate. Residue cysteine 328 is the Cysteine persulfide intermediate of the active site. Position 328 (cysteine 328) interacts with [2Fe-2S] cluster.

Belongs to the class-V pyridoxal-phosphate-dependent aminotransferase family. NifS/IscS subfamily. In terms of assembly, homodimer. Forms a heterotetramer with IscU, interacts with other sulfur acceptors. Pyridoxal 5'-phosphate serves as cofactor.

It is found in the cytoplasm. It carries out the reaction (sulfur carrier)-H + L-cysteine = (sulfur carrier)-SH + L-alanine. Its pathway is cofactor biosynthesis; iron-sulfur cluster biosynthesis. Master enzyme that delivers sulfur to a number of partners involved in Fe-S cluster assembly, tRNA modification or cofactor biosynthesis. Catalyzes the removal of elemental sulfur atoms from cysteine to produce alanine. Functions as a sulfur delivery protein for Fe-S cluster synthesis onto IscU, an Fe-S scaffold assembly protein, as well as other S acceptor proteins. This is Cysteine desulfurase IscS from Helicobacter pylori (strain ATCC 700392 / 26695) (Campylobacter pylori).